The following is a 92-amino-acid chain: Small ribosomal subunit protein uS19 (92 aa).

The protein belongs to the universal ribosomal protein uS19 family.

In terms of biological role, protein S19 forms a complex with S13 that binds strongly to the 16S ribosomal RNA. The chain is Small ribosomal subunit protein uS19 from Gloeobacter violaceus (strain ATCC 29082 / PCC 7421).